Reading from the N-terminus, the 183-residue chain is Type II secretion system protein H (183 aa).

A propeptide spans 1-8 (MRRHRQSG) (leader sequence). F9 bears the N-methylphenylalanine mark. Residues 9-28 (FTLLEVLLVAMLMGLVATAV) form a helical membrane-spanning segment.

This sequence belongs to the GSP H family. In terms of assembly, type II secretion is composed of four main components: the outer membrane complex, the inner membrane complex, the cytoplasmic secretion ATPase and the periplasm-spanning pseudopilus. Interacts with core component ExeG. In terms of processing, cleaved by prepilin peptidase. Methylated by prepilin peptidase at the amino group of the N-terminal phenylalanine once the leader sequence is cleaved by prepilin peptidase.

It localises to the cell inner membrane. Its function is as follows. Component of the type II secretion system required for the energy-dependent secretion of extracellular factors such as proteases and toxins from the periplasm. Part of the pseudopilus tip complex that is critical for the recognition and binding of secretion substrates. In Aeromonas hydrophila, this protein is Type II secretion system protein H (exeH).